The chain runs to 471 residues: Alpha-galactosidase (471 aa).

A signal peptide spans 1 to 18 (MSYIYLFITAAAVTGALG). C42 and C74 are disulfide-bonded. D72 and D73 together coordinate substrate. N-linked (GlcNAc...) asparagine glycosylation occurs at N82. Residues C121 and C151 are joined by a disulfide bond. K147 provides a ligand contact to substrate. Residue D149 is the Nucleophile of the active site. Residue N175 is glycosylated (N-linked (GlcNAc...) asparagine). R205 contributes to the substrate binding site. Catalysis depends on D209, which acts as the Proton donor. 2 disulfides stabilise this stretch: C221-C237 and C223-C230. Q251 lines the substrate pocket. N-linked (GlcNAc...) asparagine glycosylation is found at N270, N361, N370, N417, N422, N435, and N454.

It belongs to the glycosyl hydrolase 27 family. In terms of assembly, homotetramer.

It is found in the secreted. It catalyses the reaction Hydrolysis of terminal, non-reducing alpha-D-galactose residues in alpha-D-galactosides, including galactose oligosaccharides, galactomannans and galactolipids.. The sequence is that of Alpha-galactosidase (MEL) from Saccharomyces mikatae (Yeast).